The primary structure comprises 605 residues: MAKVDTTERLAELRKLMKERNVDIYMVPSEDSHQSEYIAPCDARRGSAGYAVITHDKAALATDGRYFNQAEKQLDGNWELLKQGIQDVPTIQDWTADQVEGGKVVAVDPSVVTAADARKLADKIKKKGGEYKAVDDNLVDKIWSDRPSRPHEKVIVQPIEFSGKSFEDKIEDLRKELEKKKSLGFVVSMLDEIAWLFNLRGSDIPYNPVFFSYAVVTPTTVTLYVDDHKLPEEVKKHLGDKVTIRPYNAIFEELTTLSKEAFTKDKADATSKFLTSSRASWALNKALGGEDRVEETRSPVGDAKAVKNEVELEGMRQCHLRDGAALSEYFAWLEDQLINKKAELDEVDGADKLEAIRKKHDKFMGLSFDTISSTGANAAVIHYKPEKGECAVIDAKAIYLCDSGAQYRDGTTDTTRTVHFTEPTEMEKKAYTLVLKGNMALERVKFPKGTTGFALDSLARQFLWAEGLDYRHGTGHGVGSFLNVHEGPIGIGTRVQYSEVSLAVGNVVSDEPGYYEDGKFGIRIENMIMVKEVETSHKFGDKPYLGFEHVTMTPHCRNLVDMSLLGEDEKQFINDYHKEVYEKTSGYFEDDALTLKWLKRETAPY.

Residues D402, D413, E511, and E525 each contribute to the Mn(2+) site.

This sequence belongs to the peptidase M24B family. Requires Mn(2+) as cofactor.

The catalysed reaction is Release of any N-terminal amino acid, including proline, that is linked to proline, even from a dipeptide or tripeptide.. In terms of biological role, catalyzes the removal of a penultimate prolyl residue from the N-termini of peptides. The polypeptide is Probable Xaa-Pro aminopeptidase P (AMPP) (Leptosphaeria maculans (strain JN3 / isolate v23.1.3 / race Av1-4-5-6-7-8) (Blackleg fungus)).